The following is a 112-amino-acid chain: Colipase (112 aa).

Residues 1–17 form the signal peptide; the sequence is MEKILVLLLVALAVVYA. Positions 18-22 are cleaved as a propeptide — enterostatin, activation peptide; the sequence is VPDPR. Intrachain disulfides connect Cys-34-Cys-45, Cys-40-Cys-56, Cys-44-Cys-78, Cys-66-Cys-86, and Cys-80-Cys-104.

It belongs to the colipase family. In terms of assembly, forms a 1:1 stoichiometric complex with pancreatic lipase. Expressed by the pancreas.

Its subcellular location is the secreted. Functionally, colipase is a cofactor of pancreatic lipase. It allows the lipase to anchor itself to the lipid-water interface. Without colipase the enzyme is washed off by bile salts, which have an inhibitory effect on the lipase. In terms of biological role, enterostatin has a biological activity as a satiety signal. This is Colipase (CLPS) from Canis lupus familiaris (Dog).